We begin with the raw amino-acid sequence, 326 residues long: PSKSGPRPSKSGPRPSKSGPRPSKSGPRPSKSGPRPEKCGSAMRKAEAEKCAKRKGRFSASKCRCTSAGKPSKSEPRTERPTTCVESSESDEVTPTPEVPTTCVDSSESRESPVCDDAMRKSEGEKCANLGGKFNAENCKCTPEPVTEGPTTCVESSEGDDSLVCDDEMRRSEAEKCTKIGGKFDSETCKCTSEPVTEGPTTCLESSESDEVTTKKPCDCTCAPECKRRKMIIDVLLKYFYRDVYDKNCCKENCKCDGAKFPECEESNSKQSGMFDILAKLFKPQGGDFEAGSVEVDGKKLTSEKKEKFGKALQDAVKGLEDVLNS.

The span at 1 to 33 (PSKSGPRPSKSGPRPSKSGPRPSKSGPRPSKSG) shows a compositional bias: low complexity. The disordered stretch occupies residues 1–119 (PSKSGPRPSK…RESPVCDDAM (119 aa)). The segment covering 34 to 51 (PRPEKCGSAMRKAEAEKC) has biased composition (basic and acidic residues). The segment covering 93 to 102 (VTPTPEVPTT) has biased composition (low complexity). A compositionally biased stretch (basic and acidic residues) spans 107–119 (SESRESPVCDDAM).

In terms of tissue distribution, salivary gland.

The protein resides in the secreted. Used by the larvae to construct a supramolecular structure, the larval tube. The chain is Balbiani ring protein 1 (BR1) from Chironomus pallidivittatus (Midge).